Consider the following 324-residue polypeptide: GTP cyclohydrolase 1 (324 aa).

Disordered stretches follow at residues 33 to 59 and 79 to 119; these read GRNN…NQAE and VPLA…TPGH. Positions 40-49 are enriched in low complexity; it reads STSSTSGTSS. 2 stretches are compositionally biased toward polar residues: residues 50–59 and 93–117; these read LADRQQNQAE and TNGS…STTP. Zn(2+) contacts are provided by Cys-214, His-217, and Cys-285.

It belongs to the GTP cyclohydrolase I family. Toroid-shaped homodecamer, composed of two pentamers of five dimers. As to expression, isoform B is expressed almost exclusively in adult heads.

The catalysed reaction is GTP + H2O = 7,8-dihydroneopterin 3'-triphosphate + formate + H(+). It functions in the pathway cofactor biosynthesis; 7,8-dihydroneopterin triphosphate biosynthesis; 7,8-dihydroneopterin triphosphate from GTP: step 1/1. Isoform B is required for eye pigment production, Isoform C may be required for normal embryonic development and segment pattern formation. The protein is GTP cyclohydrolase 1 (Pu) of Drosophila melanogaster (Fruit fly).